Reading from the N-terminus, the 260-residue chain is Triosephosphate isomerase (260 aa).

Residue 11–13 (NWK) participates in substrate binding. The Electrophile role is filled by H103. The active-site Proton acceptor is E175. Substrate is bound by residues G181, S220, and 241-242 (GG).

Belongs to the triosephosphate isomerase family. In terms of assembly, homodimer.

The protein localises to the cytoplasm. It catalyses the reaction D-glyceraldehyde 3-phosphate = dihydroxyacetone phosphate. It functions in the pathway carbohydrate biosynthesis; gluconeogenesis. The protein operates within carbohydrate degradation; glycolysis; D-glyceraldehyde 3-phosphate from glycerone phosphate: step 1/1. Functionally, involved in the gluconeogenesis. Catalyzes stereospecifically the conversion of dihydroxyacetone phosphate (DHAP) to D-glyceraldehyde-3-phosphate (G3P). The chain is Triosephosphate isomerase from Shewanella sp. (strain MR-4).